We begin with the raw amino-acid sequence, 558 residues long: Cytochrome c oxidase subunit 1-beta (558 aa).

The Cytoplasmic portion of the chain corresponds to 1–28 (MADAAVHGHGDHHDTRGFFTRWFMSTNH). A helical membrane pass occupies residues 29 to 59 (KDIGILYLFTAGIVGLISVCFTVYMRMELQH). The Periplasmic segment spans residues 60–82 (PGVQYMCLEGARLIADASAECTP). Residues cysteine 66 and cysteine 80 are joined by a disulfide bond. The helical transmembrane segment at 83-120 (NGHLWNVMITYHGVLMMFFVVIPALFGGFGNYFMPLHI) threads the bilayer. Histidine 94 provides a ligand contact to Fe(II)-heme a. Topologically, residues 121–126 (GAPDMA) are cytoplasmic. A helical membrane pass occupies residues 127–151 (FPRLNNLSYWMYVCGVALGVASLLA). Topologically, residues 152–176 (PGGNDQMGSGVGWVLYPPLSTTEAG) are periplasmic. The chain crosses the membrane as a helical span at residues 177-206 (YSMDLAIFAVHVSGASSILGAINIITTFLN). Topologically, residues 207–217 (MRAPGMTLFKV) are cytoplasmic. The chain crosses the membrane as a helical span at residues 218-251 (PLFAWSVFITAWLILLSLPVLAGAITMLLMDRNF). Residues 252–262 (GTQFFDPAGGG) lie on the Periplasmic side of the membrane. The chain crosses the membrane as a helical span at residues 263 to 299 (DPVLYQHILWFFGHPEVYIIILPGFGIISHVISTFAK). Cu cation is bound by residues histidine 276 and tyrosine 280. The 1'-histidyl-3'-tyrosine (His-Tyr) cross-link spans 276 to 280 (HPEVY). Topologically, residues 300–303 (KPIF) are cytoplasmic. Residues 304–331 (GYLPMVLAMAAIGILGFVVWAHHMYTAG) form a helical membrane-spanning segment. Cu cation is bound by residues histidine 325 and histidine 326. Position 332 (methionine 332) is a topological domain, periplasmic. A helical membrane pass occupies residues 333–364 (SLTQQAYFMLATMTIAVPTGIKVFSWIATMWG). Residues 365-369 (GSIEF) lie on the Cytoplasmic side of the membrane. Residues 370–395 (KTPMLWAFGFLFLFTVGGVTGVVLSQ) traverse the membrane as a helical segment. At 396–404 (APLDRVYHD) the chain is on the periplasmic side. The chain crosses the membrane as a helical span at residues 405 to 437 (TYYVVAHFHYVMSLGAVFGIFAGVYYWIGKMSG). Heme a3 is bound at residue histidine 411. Residue histidine 413 coordinates Fe(II)-heme a. The Cytoplasmic segment spans residues 438 to 440 (RQY). The helical transmembrane segment at 441–469 (PEWAGQLHFWMMFIGSNLIFFPQHFLGRQ) threads the bilayer. Residues 470–478 (GMPRRYIDY) lie on the Periplasmic side of the membrane. The helical transmembrane segment at 479 to 514 (PVEFAYWNNISSIGAYISFASFLFFIGIVFYTLFAG) threads the bilayer. Topologically, residues 515–558 (KRVNVPNYWNEHADTLEWTLPSPPPEHTFETLPKREDWDRAHAH) are cytoplasmic.

This sequence belongs to the heme-copper respiratory oxidase family. Cu(2+) is required as a cofactor. Heme serves as cofactor. Post-translationally, his-276 and Tyr-280 are involved in the formation of a copper-coordinated covalent cross-link at the active site of the catalytic subunit I.

The protein resides in the cell inner membrane. The enzyme catalyses 4 Fe(II)-[cytochrome c] + O2 + 8 H(+)(in) = 4 Fe(III)-[cytochrome c] + 2 H2O + 4 H(+)(out). Its pathway is energy metabolism; oxidative phosphorylation. Functionally, subunit I and II form the functional core of the enzyme complex. Electrons originating in cytochrome c are transferred via heme a and Cu(A) to the binuclear center formed by heme a3 and Cu(B). This cytochrome c oxidase shows proton pump activity across the membrane in addition to the electron transfer. The protein is Cytochrome c oxidase subunit 1-beta (ctaDII) of Paracoccus denitrificans.